A 301-amino-acid polypeptide reads, in one-letter code: Probable alpha-L-glutamate ligase (301 aa).

Residues 104 to 287 (LQLLSRRGVG…IASQIIAFIE (184 aa)) form the ATP-grasp domain. ATP is bound by residues K141, 178 to 179 (EF), D187, and 211 to 213 (RSN). The Mg(2+) site is built by D248, E260, and N262. Mn(2+) is bound by residues D248, E260, and N262.

Belongs to the RimK family. Mg(2+) is required as a cofactor. Requires Mn(2+) as cofactor.

The chain is Probable alpha-L-glutamate ligase from Hydrogenovibrio crunogenus (strain DSM 25203 / XCL-2) (Thiomicrospira crunogena).